We begin with the raw amino-acid sequence, 400 residues long: Formate-dependent phosphoribosylglycinamide formyltransferase (400 aa).

N(1)-(5-phospho-beta-D-ribosyl)glycinamide is bound by residues 22–23 (EL) and Glu-82. ATP is bound by residues Arg-115, Lys-156, 161–166 (SSGKGQ), 196–199 (EGFI), and Glu-204. Positions 120 to 309 (RLAAETLGLP…EFALHARAIL (190 aa)) constitute an ATP-grasp domain. Mg(2+) is bound by residues Glu-268 and Glu-280. N(1)-(5-phospho-beta-D-ribosyl)glycinamide contacts are provided by residues Asp-287, Lys-361, and 368 to 369 (RR).

The protein belongs to the PurK/PurT family. As to quaternary structure, homodimer.

The catalysed reaction is N(1)-(5-phospho-beta-D-ribosyl)glycinamide + formate + ATP = N(2)-formyl-N(1)-(5-phospho-beta-D-ribosyl)glycinamide + ADP + phosphate + H(+). Its pathway is purine metabolism; IMP biosynthesis via de novo pathway; N(2)-formyl-N(1)-(5-phospho-D-ribosyl)glycinamide from N(1)-(5-phospho-D-ribosyl)glycinamide (formate route): step 1/1. In terms of biological role, involved in the de novo purine biosynthesis. Catalyzes the transfer of formate to 5-phospho-ribosyl-glycinamide (GAR), producing 5-phospho-ribosyl-N-formylglycinamide (FGAR). Formate is provided by PurU via hydrolysis of 10-formyl-tetrahydrofolate. The polypeptide is Formate-dependent phosphoribosylglycinamide formyltransferase (Xanthomonas axonopodis pv. citri (strain 306)).